The chain runs to 267 residues: Undecaprenyl-diphosphatase (267 aa).

A run of 8 helical transmembrane segments spans residues 1-21 (MSYF…FLPI), 39-59 (QGLA…VIYF), 83-103 (AKLA…GLVM), 111-131 (LRSA…LWWV), 144-164 (AGWK…IPGT), 189-209 (FLMS…KLVT), 218-238 (FLLT…HLFL), and 246-266 (MTPF…YLLM).

Belongs to the UppP family.

It is found in the cell inner membrane. It carries out the reaction di-trans,octa-cis-undecaprenyl diphosphate + H2O = di-trans,octa-cis-undecaprenyl phosphate + phosphate + H(+). Functionally, catalyzes the dephosphorylation of undecaprenyl diphosphate (UPP). Confers resistance to bacitracin. The sequence is that of Undecaprenyl-diphosphatase from Vibrio vulnificus (strain CMCP6).